A 351-amino-acid chain; its full sequence is Phosphoribosylformylglycinamidine cyclo-ligase (351 aa).

Belongs to the AIR synthase family.

The protein resides in the cytoplasm. The enzyme catalyses 2-formamido-N(1)-(5-O-phospho-beta-D-ribosyl)acetamidine + ATP = 5-amino-1-(5-phospho-beta-D-ribosyl)imidazole + ADP + phosphate + H(+). Its pathway is purine metabolism; IMP biosynthesis via de novo pathway; 5-amino-1-(5-phospho-D-ribosyl)imidazole from N(2)-formyl-N(1)-(5-phospho-D-ribosyl)glycinamide: step 2/2. This is Phosphoribosylformylglycinamidine cyclo-ligase from Burkholderia ambifaria (strain MC40-6).